The chain runs to 532 residues: 2,3-bisphosphoglycerate-independent phosphoglycerate mutase (532 aa).

Positions 15 and 65 each coordinate Mn(2+). Catalysis depends on Ser65, which acts as the Phosphoserine intermediate. Residues His126, 156–157 (RD), Arg188, Arg194, 258–261 (RPDR), and Lys331 each bind substrate. Residues Asp398, His402, Asp439, His440, and His457 each coordinate Mn(2+).

The protein belongs to the BPG-independent phosphoglycerate mutase family. Monomer. Requires Mn(2+) as cofactor.

It carries out the reaction (2R)-2-phosphoglycerate = (2R)-3-phosphoglycerate. Its pathway is carbohydrate degradation; glycolysis; pyruvate from D-glyceraldehyde 3-phosphate: step 3/5. Functionally, catalyzes the interconversion of 2-phosphoglycerate and 3-phosphoglycerate. This is 2,3-bisphosphoglycerate-independent phosphoglycerate mutase from Rippkaea orientalis (strain PCC 8801 / RF-1) (Cyanothece sp. (strain PCC 8801)).